The chain runs to 258 residues: Transcription cofactor vestigial-like protein 1 (258 aa).

Polar residues-rich tracts occupy residues 55–65 and 74–87; these read PQELTPSSQSE and SMSPNQWRYSSPWT. The interval 55-93 is disordered; that stretch reads PQELTPSSQSEGVMLKNDDSMSPNQWRYSSPWTKPQPEV.

This sequence belongs to the vestigial family. Interacts with TEFs.

The protein localises to the nucleus. May act as a specific coactivator for the mammalian TEFs. This chain is Transcription cofactor vestigial-like protein 1 (VGLL1), found in Homo sapiens (Human).